Here is a 341-residue protein sequence, read N- to C-terminus: L-threonine 3-dehydrogenase (341 aa).

Residue C38 participates in Zn(2+) binding. Active-site charge relay system residues include T40 and H43. Positions 63, 64, 93, 96, 99, and 107 each coordinate Zn(2+). NAD(+) contacts are provided by residues I175, D195, R200, 262-264 (LGI), and 286-287 (IY).

Belongs to the zinc-containing alcohol dehydrogenase family. In terms of assembly, homotetramer. Zn(2+) serves as cofactor.

The protein localises to the cytoplasm. It catalyses the reaction L-threonine + NAD(+) = (2S)-2-amino-3-oxobutanoate + NADH + H(+). The protein operates within amino-acid degradation; L-threonine degradation via oxydo-reductase pathway; glycine from L-threonine: step 1/2. Its function is as follows. Catalyzes the NAD(+)-dependent oxidation of L-threonine to 2-amino-3-ketobutyrate. The chain is L-threonine 3-dehydrogenase from Shewanella sp. (strain MR-7).